The sequence spans 421 residues: O-glycosyltransferase braB (421 aa).

The interval M1 to P26 is disordered. The span at G13–A22 shows a compositional bias: polar residues.

It belongs to the afumC glycosyltransferase family.

The protein operates within secondary metabolite biosynthesis. O-glycosyltransferase; part of the gene cluster that mediates the biosynthesis of the brasilane terpene glycosides brasilane D and E. The biosynthesis starts with the activity of the terpene cyclase braA that converts farnesyl pyrophosphate into the sesquiterpene alcohol trichobrasilenol. Subsequently, trichobrasilenol is glycosylated by the O-glycosyltransferase braB putatively using UDP-GlcNAc as sugar donor to yield brasilane A. The latter then undergoes two rounds of oxidation performed by the cytochrome P450 monooxygenase braC. In the first round braC hydroxylates C-12 forming brasilane D, which serves as substrate in the second round to establish the epoxide at the bond between C-5 and C-10 and oxidize the alcohol at C-12 to an aldehyde leading to the final product brasilane E. BraB is also able to glycosylate geraniol, linalool, perillyl alcohol, 3,4-dichlorophenol and, to a lesser extend, benzyl alcohol. In Annulohypoxylon truncatum (Hypoxylon truncatum), this protein is O-glycosyltransferase braB.